Consider the following 1466-residue polypeptide: Helicase ARIP4 (1466 aa).

Disordered stretches follow at residues 1-137 and 185-235; these read MSDE…ERRK and DSSS…THVN. The segment covering 11–49 has biased composition (acidic residues); it reads PDLDPDVELEDEEEEEEEEEVAVEEHDRDDEEGLLDDTS. Low complexity predominate over residues 72–82; sequence TSTTSSQSEPS. Residues 99–114 are compositionally biased toward basic residues; it reads KKRAQKPSHMRRNIRK. Residues Lys114 and Lys126 each participate in a glycyl lysine isopeptide (Lys-Gly) (interchain with G-Cter in SUMO2) cross-link. Residues 191–200 are compositionally biased toward basic and acidic residues; the sequence is EDEKSSRDEV. Lys271 is covalently cross-linked (Glycyl lysine isopeptide (Lys-Gly) (interchain with G-Cter in SUMO2)). Residues 291–511 enclose the Helicase ATP-binding domain; it reads RFKTSSGFGC…WCMVDFVRPD (221 aa). Position 304–311 (304–311) interacts with ATP; sequence HSMGLGKT. A DEAH box motif is present at residues 462-465; that stretch reads DEGH. Positions 550–554 match the LXXLL motif 1 motif; it reads LHSLL. Residues 649–670 form a disordered region; sequence SAGTSARCPPHGTKVKGEDSAL. Residues Lys664, Lys681, Lys758, Lys900, Lys1013, and Lys1017 each participate in a glycyl lysine isopeptide (Lys-Gly) (interchain with G-Cter in SUMO2) cross-link. Positions 727-895 constitute a Helicase C-terminal domain; the sequence is HLIEESVKLG…RVVDDLNPML (169 aa). 2 disordered regions span residues 1026 to 1045 and 1120 to 1170; these read QSTP…GVSS and ATGK…VSPD. A compositionally biased stretch (polar residues) spans 1135 to 1154; the sequence is SGSQGPSLASTSNGRHSASS. 2 positions are modified to phosphoserine: Ser1168 and Ser1171. 2 disordered regions span residues 1184–1212 and 1259–1281; these read VAAA…MDNS and TPSV…APVQ. Thr1259 is subject to Phosphothreonine. An LXXLL motif 2 motif is present at residues 1328-1332; that stretch reads LSNLL. Residues 1444-1466 form a disordered region; it reads AEVGFSSNDDEDKDDDVIEVTGK. Residues 1451-1466 show a composition bias toward acidic residues; the sequence is NDDEDKDDDVIEVTGK.

It belongs to the SNF2/RAD54 helicase family. Interacts with AR via its N-terminus. Interacts with DYRK1A. Binds DNA and mononucleosomes, but does not seem to form large multiprotein complexes. Post-translationally, sumoylated. As to expression, expressed at relatively low level, with highest expression in testis, liver and kidney. In brain, it is expressed in hippocampal and cerebellar neurons. In testis, it is present at high level in Sertoli cell nuclei. Also present in Leydig cell (at protein level).

The protein resides in the nucleus. It carries out the reaction ATP + H2O = ADP + phosphate + H(+). Enzyme activity is enhanced by dsDNA (double-stranded DNA) and ssDNA (single-stranded DNA). DNA helicase that modulates androgen receptor (AR)-dependent transactivation in a promoter-dependent manner. Not able to remodel mononucleosomes in vitro. Acts as an AR-coregulator in Sertoli cells. The protein is Helicase ARIP4 (Rad54l2) of Mus musculus (Mouse).